The following is a 440-amino-acid chain: Syntrophin-1 (440 aa).

PH domains are found at residues 2–208 (AAVR…ACTT) and 227–340 (QVRH…IGGY). The region spanning 45-128 (TVRVVKYDGN…VVDLQVQYRR (84 aa)) is the PDZ domain. The 57-residue stretch at 384-440 (SFETIRATGDDGGRFLWVDFGPPHGEQELDLLNSAKPVVFILHSFLATKVYRLGLYA) folds into the SU domain.

The protein belongs to the syntrophin family. As to quaternary structure, component of the dystrophin glycoprotein complex (DGC). Interacts with dyb-1, dys-1 and snf-6 to form the DGC. In terms of tissue distribution, expressed in neurons and muscles; particularly strong expression in the body wall, head and vulval muscles, and in ventral nerve cord (at protein level).

It is found in the membrane. Its subcellular location is the cytoplasm. The protein resides in the cytoskeleton. Adapter protein that binds to and probably organizes the subcellular localization of a variety of membrane proteins. May link various receptors to the actin cytoskeleton and the dystrophin glycoprotein complex (DGC). May also act by slowing calcium channel activity via a direct or indirect mechanism potentially involving other second messengers. Plays an early role in the formation of the neuromuscular junction and is necessary for muscle maintenance. In Caenorhabditis elegans, this protein is Syntrophin-1.